A 620-amino-acid polypeptide reads, in one-letter code: MDSHTLLQALIYLGSAALIVPIAVRLGLGSVLGYLIAGCIIGPWGLRLVTDAESILHFAEIGVVLMLFVIGLELDPQRLWKLRASVFGGGALQMGVCGGLIGLFCMFLGLRWQVAELIGMTLALSSTAIAMQAMNERNLTVSQVGRSAFAVLLFQDIAAIPLVAMIPLLAASGASTTLGAFALSALKVAGALALVVLLGRYVTRPALRFVARSGLREVFSAVALFLVFGFGLLLEEVGLSMAMGAFLAGVLLASSEYRHALESDIEPFKGLLLGLFFIGVGMSIDFGTLVENPLRILLLLAGFLAIKIVMLWLVARPLGVPAKQRRWFAVLLGQGSEFAFVVFGAAQMADVLEPEWAKALTLAVALSMAATPIFLVLLTRMEKTATGEAREADEIDEEQPRVIVAGFGRFGQIAGRLLLSSGVKMVVLDHDPDHIETLRKFGMKVFYGDATRMDLLESAGAAKAEVLINAIDDPQTNLQLSELVKSHFPHLQIIARARDVDHYIRLRQAGVAMPERETFEGALKSGRQALEALGLGRYEARERADLFRHFNTRMVEEMAKGENDPLSRAAAYKRTSAMLSEIITEDREHLSLIQRHGWQGTAEGKHSGEVADEPEVKPSI.

The Periplasmic portion of the chain corresponds to 1-3 (MDS). The helical transmembrane segment at 4-24 (HTLLQALIYLGSAALIVPIAV) threads the bilayer. Arg-25 is a topological domain (cytoplasmic). The chain crosses the membrane as a helical span at residues 26–46 (LGLGSVLGYLIAGCIIGPWGL). Residues 47–53 (RLVTDAE) lie on the Periplasmic side of the membrane. The helical transmembrane segment at 54 to 74 (SILHFAEIGVVLMLFVIGLEL) threads the bilayer. Residues 75 to 89 (DPQRLWKLRASVFGG) are Cytoplasmic-facing. The chain crosses the membrane as a helical span at residues 90 to 110 (GALQMGVCGGLIGLFCMFLGL). Residues 111–113 (RWQ) lie on the Periplasmic side of the membrane. A helical transmembrane segment spans residues 114–134 (VAELIGMTLALSSTAIAMQAM). The Cytoplasmic portion of the chain corresponds to 135–148 (NERNLTVSQVGRSA). A helical membrane pass occupies residues 149 to 169 (FAVLLFQDIAAIPLVAMIPLL). Residues 170–177 (AASGASTT) are Periplasmic-facing. A helical transmembrane segment spans residues 178–198 (LGAFALSALKVAGALALVVLL). At 199-213 (GRYVTRPALRFVARS) the chain is on the cytoplasmic side. A helical membrane pass occupies residues 214-233 (GLREVFSAVALFLVFGFGLL). Over 234–236 (LEE) the chain is Periplasmic. Residues 237 to 254 (VGLSMAMGAFLAGVLLAS) traverse the membrane as a helical segment. The Cytoplasmic segment spans residues 255-269 (SEYRHALESDIEPFK). A helical membrane pass occupies residues 270–290 (GLLLGLFFIGVGMSIDFGTLV). Over 291–293 (ENP) the chain is Periplasmic. A helical transmembrane segment spans residues 294-314 (LRILLLLAGFLAIKIVMLWLV). Residues 315–326 (ARPLGVPAKQRR) lie on the Cytoplasmic side of the membrane. A helical transmembrane segment spans residues 327–347 (WFAVLLGQGSEFAFVVFGAAQ). The Periplasmic segment spans residues 348 to 358 (MADVLEPEWAK). Residues 359–379 (ALTLAVALSMAATPIFLVLLT) form a helical membrane-spanning segment. Over 380-620 (RMEKTATGEA…ADEPEVKPSI (241 aa)) the chain is Cytoplasmic. Residues 399-518 (QPRVIVAGFG…AGVAMPERET (120 aa)) form the RCK N-terminal domain. The segment at 599–620 (QGTAEGKHSGEVADEPEVKPSI) is disordered.

The protein belongs to the monovalent cation:proton antiporter 2 (CPA2) transporter (TC 2.A.37) family. KefC subfamily. In terms of assembly, homodimer. Interacts with the regulatory subunit KefF.

It is found in the cell inner membrane. Pore-forming subunit of a potassium efflux system that confers protection against electrophiles. Catalyzes K(+)/H(+) antiport. In Salmonella typhimurium (strain LT2 / SGSC1412 / ATCC 700720), this protein is Glutathione-regulated potassium-efflux system protein KefC.